A 723-amino-acid chain; its full sequence is MRFSKLSLAITTTLVTANALAQSVELDSINVIATRDPSRFAYTPEKQSKDSLLSKQATSVADALEDIPNVDVRGGSRSIAQKPNIRGLSDNRVVQVIDGVRQNFDLAHRGSYFLPMSLIQEIEVIKGPSSSLWGSGALGGVVAMRTPNALDLLKNNDKFGVKIRQGYQTANNLSEKDVSVFAANDKFDVLISGFYNNADNLRTGKGNKLNNTAYKQFGGLAKFGWQINDANRVELSHRETRFKQTAPSNNEVENELTNEQITDQIKKFHGQKDDLLPPTTQPSPSERSEFYSKVKTRLGSVSYLTDQQIPDQSTVFNYYLTPDNPYLNTHIALYNNKTIEKEQRKVSGVKDQTKLTTRGINLRNSSELSHISFVYGVDYMRDKIRTERGTNGSDAKFRADPYNANSNTTGVYLIAHIPLFGEKLLVSPSVRYDHYDTSSKTVKYKDNHLSPATKLTWIVTNWLDFTAKYNEAFRAPSMQERFVSGAHFGANTLGLDHINRFVANPNLRPETAKNKEITANLHFDSLFKQGDKFKIEATYFRNDVKDFINLKIFNDAKTSASAGANPNTNGALLPKNSQYQNITNARLSGIELQAQYQTERLTLFTNYGSTKGKDKDSGEALSNIAASKIGVGVNYALVKDKFTVGATVTHYAAQRRVPKDHSVTYPSYILTDLRATYAPLKGEWKNLRLDFALENLFDRKYQPAFSLMEGTGRNAKISAVYSF.

An N-terminal signal peptide occupies residues M1–A21. A TBDR plug domain is found at D36–P147. In terms of domain architecture, TBDR beta-barrel spans K158 to F723. Residues S706–F723 carry the TonB C-terminal box motif.

This sequence belongs to the TonB-dependent receptor family.

It is found in the cell outer membrane. Functionally, required for utilization of free heme at low concentrations. This chain is Heme/hemopexin utilization protein C (hxuC), found in Haemophilus influenzae (strain ATCC 51907 / DSM 11121 / KW20 / Rd).